Reading from the N-terminus, the 86-residue chain is Putative sodium channel toxin Ts17 (86 aa).

The first 19 residues, 1–19 (MNYFIFLVVACLLTAGTEG), serve as a signal peptide directing secretion. Residues 21 to 82 (KDGYPVEGDN…EPTKTSGRCK (62 aa)) form the LCN-type CS-alpha/beta domain. Intrachain disulfides connect cysteine 31–cysteine 81, cysteine 35–cysteine 57, cysteine 43–cysteine 64, and cysteine 47–cysteine 66. A Proline amide modification is found at proline 83.

The protein belongs to the long (4 C-C) scorpion toxin superfamily. Sodium channel inhibitor family. Alpha subfamily. Expressed by the venom gland.

It is found in the secreted. Alpha toxins bind voltage-independently at site-3 of sodium channels (Nav) and inhibit the inactivation of the activated channels, thereby blocking neuronal transmission. This Tityus serrulatus (Brazilian scorpion) protein is Putative sodium channel toxin Ts17.